Consider the following 51-residue polypeptide: Large ribosomal subunit protein eL39 (51 aa).

It belongs to the eukaryotic ribosomal protein eL39 family.

This chain is Large ribosomal subunit protein eL39, found in Methanosarcina acetivorans (strain ATCC 35395 / DSM 2834 / JCM 12185 / C2A).